The sequence spans 383 residues: uncharacterized protein (383 aa).

It belongs to the peptidase M20 family.

This is an uncharacterized protein from Staphylococcus aureus (strain N315).